Consider the following 533-residue polypeptide: (E)-beta-farnesene synthase (533 aa).

The Mg(2+) site is built by Asp286 and Asp290. Residues Asp286, Asp290, Arg427, and Asn430 each coordinate substrate. Positions 286 to 290 (DDMMD) match the DDXXD motif motif. Mg(2+) contacts are provided by Asn430 and Glu438.

The protein belongs to the terpene synthase family. In terms of assembly, monomer. Mg(2+) is required as a cofactor. The cofactor is Mn(2+).

Its subcellular location is the cytoplasm. It catalyses the reaction (2E,6E)-farnesyl diphosphate = (E)-beta-farnesene + diphosphate. The enzyme catalyses (2E,6E)-farnesyl diphosphate = alpha-copaene + diphosphate. It carries out the reaction (2E,6E)-farnesyl diphosphate = (1S,5S,6R)-alpha-bergamotene + diphosphate. The catalysed reaction is (2E,6E)-farnesyl diphosphate = (-)-(E)-beta-caryophyllene + diphosphate. It catalyses the reaction (2E,6E)-farnesyl diphosphate = delta-cadinene + diphosphate. The enzyme catalyses (2E,6E)-farnesyl diphosphate = (+)-germacrene D + diphosphate. It carries out the reaction (2E,6E)-farnesyl diphosphate = alpha-zingiberene + diphosphate. The catalysed reaction is (2E,6E)-farnesyl diphosphate = alpha-muurolene + diphosphate. It catalyses the reaction (2E,6E)-farnesyl diphosphate = (S)-beta-bisabolene + diphosphate. The enzyme catalyses (2E,6E)-farnesyl diphosphate = beta-sesquiphellandrene + diphosphate. It carries out the reaction (2E,6E)-farnesyl diphosphate = sesquisabinene A + diphosphate. It functions in the pathway secondary metabolite biosynthesis; terpenoid biosynthesis. In terms of biological role, sesquiterpene cyclase catalyzing mainly the production of beta-farnesene and alpha-bergamotene in equal amounts from farnesyl diphosphate. Also mediates the biosynthesis of minor sesquiterpene hydrocarbons including alpha-muurolene, beta-bisabolene, zingiberene, sesquiphellandrene, sesquisabinene A, germacrene D, delta-cadinene, alpha-copaene and (E)-beta-caryophyllene. Involved in indirect defense by producing volatile signals attracting natural enemies of herbivores. In Zea mays (Maize), this protein is (E)-beta-farnesene synthase.